We begin with the raw amino-acid sequence, 274 residues long: Histone H1.1 (274 aa).

Disordered regions lie at residues 1 to 63 (MSEV…SSHP) and 129 to 155 (PSASAKASSPKAAAEKSAPAKKKPATV). The residue at position 2 (Ser-2) is an N-acetylserine. Over residues 16-25 (TAADAPVTDA) the composition is skewed to low complexity. Residues 40–49 (NVKEVKEKKT) show a composition bias toward basic and acidic residues. Residues 61-130 (SHPTYEEMIK…KVKASFKLPS (70 aa)) form the H15 domain. Residues 129–145 (PSASAKASSPKAAAEKS) are compositionally biased toward low complexity. A Glycyl lysine isopeptide (Lys-Gly) (interchain with G-Cter in ubiquitin) cross-link involves residue Lys-161. Disordered stretches follow at residues 167–233 (ASKA…PAKK) and 249–274 (KTPVKKVVKPKTVKSPAKRASSRVKK). 2 stretches are compositionally biased toward low complexity: residues 175–185 (AVKPKTAAAKK) and 221–233 (AAKTAKVTSPAKK).

This sequence belongs to the histone H1/H5 family.

The protein resides in the nucleus. It is found in the chromosome. Functionally, histones H1 are necessary for the condensation of nucleosome chains into higher-order structures. This Arabidopsis thaliana (Mouse-ear cress) protein is Histone H1.1.